Consider the following 284-residue polypeptide: Pantothenate synthetase (284 aa).

ATP is bound at residue 30 to 37 (MGNLHDGH). Histidine 37 functions as the Proton donor in the catalytic mechanism. (R)-pantoate is bound at residue glutamine 61. Glutamine 61 is a beta-alanine binding site. 149–152 (GEKD) contacts ATP. Position 155 (glutamine 155) interacts with (R)-pantoate. Residues isoleucine 178 and 186–189 (LSSR) contribute to the ATP site.

It belongs to the pantothenate synthetase family. Homodimer.

It localises to the cytoplasm. It catalyses the reaction (R)-pantoate + beta-alanine + ATP = (R)-pantothenate + AMP + diphosphate + H(+). It functions in the pathway cofactor biosynthesis; (R)-pantothenate biosynthesis; (R)-pantothenate from (R)-pantoate and beta-alanine: step 1/1. Catalyzes the condensation of pantoate with beta-alanine in an ATP-dependent reaction via a pantoyl-adenylate intermediate. This Salmonella choleraesuis (strain SC-B67) protein is Pantothenate synthetase.